Consider the following 210-residue polypeptide: Probable high-affinity nitrate transporter-activating protein 2.2 (210 aa).

An N-terminal signal peptide occupies residues 1–23; that stretch reads MARFGAVIHRVFLPLLLLLVVLG. Residues 182–202 form a helical membrane-spanning segment; sequence IEVAAGVLSAFSVAALAVFLV.

The protein belongs to the NAR2 family.

The protein localises to the cell membrane. Functionally, involved in nitrate transport. The sequence is that of Probable high-affinity nitrate transporter-activating protein 2.2 (NAR2.2) from Oryza sativa subsp. japonica (Rice).